A 695-amino-acid chain; its full sequence is MEGQSIELELSVMAMPELIDSTEAGHTAGVKTDSNPQAIAQDRRWTIDDSENLYRITGWGEPYFSINAAGHVTVSPQADHGGALDLYELVKGLRQRNIGLPLLLRFSDILADRINRLNAAFARGIARYRYPNTYRGVYPIKCNQHRHIVESLVRYGTPYNFGLEAGSKPELMIALAMLQPQENPEPDQQNQPLLICNGYKDREYIETALLARRLGHRPIIVVEQVAEVALAIEISSNLGIKPILGVRAKLSTQGMGRWGISTGDRAKFGLTIPEMLTAIEQLRRADMLDSLQLLHFHIGSQISSISVIKEAMTEASQIFVQLAKLGANMRYLDVGGGLGVDYDGSKTNFYASKNYNIQNYVNDVISAVQDACVAAEVPCPVLISESGRAIASHQSVLIFDVVATNDINPPLPKVKGKDHAILRNLMETWETITVDNYQEAYHDVEQFKTEAISLFNFGYLGLKERAKAEELYWACCRKILQICRQQEYVPDDLENLEVNLASIYYANMSVFQSAPDSWAIDQLFPIMPIHRLDEEPTQRGILADITCDSDGKIDQFIDLRDVKSVLELHPLIEVHQPGTPPRVEPYYLGMFLVGAYQEIMGNLHNLFGDINVVHIQMNPKGYQIEHLVRGDTIAEVLGYVQYDPEDLLENMRRYCEQAMEDKRMSLEEAQLLLENYERSLLQYTYLKPTSGIHTS.

Position 141 is an N6-(pyridoxal phosphate)lysine (Lys-141). Substrate is bound at residue Leu-332 to Tyr-342.

Belongs to the Orn/Lys/Arg decarboxylase class-II family. SpeA subfamily. It depends on Mg(2+) as a cofactor. Pyridoxal 5'-phosphate is required as a cofactor.

The catalysed reaction is L-arginine + H(+) = agmatine + CO2. In terms of biological role, catalyzes the biosynthesis of agmatine from arginine. This chain is Biosynthetic arginine decarboxylase 1 (speA1), found in Synechocystis sp. (strain ATCC 27184 / PCC 6803 / Kazusa).